The sequence spans 465 residues: Trigger factor (465 aa).

The region spanning 163–248 is the PPIase FKBP-type domain; that stretch reads GDVINFNFKG…INKIKENQPA (86 aa). The segment at 431 to 465 is disordered; that stretch reads EIVNKNQNDNEIEQDKEQKDNNEEKIKQENNLENK. The segment covering 443-465 has biased composition (basic and acidic residues); the sequence is EQDKEQKDNNEEKIKQENNLENK.

The protein belongs to the FKBP-type PPIase family. Tig subfamily.

It is found in the cytoplasm. It carries out the reaction [protein]-peptidylproline (omega=180) = [protein]-peptidylproline (omega=0). Functionally, involved in protein export. Acts as a chaperone by maintaining the newly synthesized protein in an open conformation. Functions as a peptidyl-prolyl cis-trans isomerase. The chain is Trigger factor from Mesomycoplasma hyopneumoniae (strain J / ATCC 25934 / NCTC 10110) (Mycoplasma hyopneumoniae).